A 140-amino-acid chain; its full sequence is Austinoid biosynthesis clusters protein S (140 aa).

Belongs to the trt14 isomerase family. As to quaternary structure, homodimer.

The protein operates within secondary metabolite biosynthesis; terpenoid biosynthesis. In terms of biological role, part of the gene cluster B that mediates the biosynthesis of austinol and dehydroaustinol, two fungal meroterpenoids. The first step of the pathway is the synthesis of 3,5-dimethylorsellinic acid by the polyketide synthase ausA. 3,5-dimethylorsellinic acid is then prenylated by the polyprenyl transferase ausN. Further epoxidation by the FAD-dependent monooxygenase ausM and cyclization by the probable terpene cyclase ausL lead to the formation of protoaustinoid A. Protoaustinoid A is then oxidized to spiro-lactone preaustinoid A3 by the combined action of the FAD-binding monooxygenases ausB and ausC, and the dioxygenase ausE. Acid-catalyzed keto-rearrangement and ring contraction of the tetraketide portion of preaustinoid A3 by ausJ lead to the formation of preaustinoid A4. The aldo-keto reductase ausK, with the help of ausH, is involved in the next step by transforming preaustinoid A4 into isoaustinone which is in turn hydroxylated by the P450 monooxygenase ausI to form austinolide. Finally, the cytochrome P450 monooxygenase ausG modifies austinolide to austinol. Austinol can be further modified to dehydroaustinol which forms a diffusible complex with diorcinol that initiates conidiation. Due to genetic rearrangements of the clusters and the subsequent loss of some enzymes, the end products of the Emericella nidulans austinoid biosynthesis clusters are austinol and dehydroaustinol, even if additional enzymes, such as the O-acetyltransferase ausQ and the cytochrome P450 monooxygenase ausR are still functional. AusS is necessary for austinoids production and may play a possible function as a regulator. This is Austinoid biosynthesis clusters protein S from Emericella nidulans (strain FGSC A4 / ATCC 38163 / CBS 112.46 / NRRL 194 / M139) (Aspergillus nidulans).